We begin with the raw amino-acid sequence, 409 residues long: MASSSAPDENEFQFGCPPAPCQDPSEPRVLCCTACLSENLRDDEDRICPKCRADNLHPVSPGSPLTQEKVHSDVAEAEIMCPFAGVGCSFKGSPQSMQEHEATSQSSHLYLLLAVLKEWKSSPGSNLGSAPMALERNLSELQLQAAVEATGDLEVDCYRAPCCESQEELALQHLVKEKLLAQLEEKLRVFANIVAVLNKEVEASHLALAASIHQSQLDREHILSLEQRVVELQQTLAQKDQVLGKLEHSLRLMEEASFDGTFLWKITNVTKRCHESVCGRTVSLFSPAFYTAKYGYKLCLRLYLNGDGSGKKTHLSLFIVIMRGEYDALLPWPFRNKVTFMLLDQNNREHAIDAFRPDLSSASFQRPQSETNVASGCPLFFPLSKLQSPKHAYVKDDTMFLKCIVDTSA.

A Phosphoserine modification is found at Ser139. Residues 167–256 are a coiled coil; sequence EELALQHLVK…EHSLRLMEEA (90 aa). Residues Lys178 and Lys186 each participate in a glycyl lysine isopeptide (Lys-Gly) (interchain with G-Cter in ubiquitin) cross-link. The MATH domain maps to 259–405; that stretch reads DGTFLWKITN…DDTMFLKCIV (147 aa).

As to quaternary structure, homotrimer. Heterotrimer with TRAF2. Interacts with TNFRSF1A/TNFR1, TNFRSF1B/TNFR2, TNFRSF4, TNFRSF5/CD40, TNFRSF8/CD30, TNFRSF9/CD137, TNFRSF11A/RANK, TNFRSF13C, TNFRSF18/AITR, TNFRSF17/BCMA, TNFRSF19/TROY, TNFRSF19L/RELT, XEDAR, EDAR, Epstein-Barr virus BNFL1/LMP-1, TANK/ITRAF, TRAIP and RIPK2. Interacts with BIRC2 and BIRC3 N-terminus; a single BIRC2 or BIRC3 molecule interacts with a heterotrimer formed by TRAF1 and TRAF2. Interacts with MAP3K14. Interacts with NFATC2IP, TRAFD1 and with HIVEP3. Interacts with GPS2. In terms of processing, polyubiquitinated by BIRC2 and/or BIRC3, leading to its subsequent proteasomal degradation. Ubiquitinated by the SCF(FBXL2) complex, leading to its degradation by the proteasome.

The protein localises to the cytoplasm. In terms of biological role, adapter molecule that regulates the activation of NF-kappa-B and JNK. Plays a role in the regulation of cell survival and apoptosis. The heterotrimer formed by TRAF1 and TRAF2 is part of a E3 ubiquitin-protein ligase complex that promotes ubiquitination of target proteins, such as MAP3K14. The TRAF1/TRAF2 complex recruits the antiapoptotic E3 protein-ubiquitin ligases BIRC2 and BIRC3 to TNFRSF1B/TNFR2. In Mus musculus (Mouse), this protein is TNF receptor-associated factor 1 (Traf1).